A 496-amino-acid polypeptide reads, in one-letter code: Angiopoietin-2 (496 aa).

The N-terminal stretch at 1-18 is a signal peptide; it reads MWQLVFLTLSCDLAVATA. Residues Asn90, Asn120, Asn134, Asn152, Asn241, and Asn304 are each glycosylated (N-linked (GlcNAc...) asparagine). A coiled-coil region spans residues 167–249; that stretch reads STNKLEKQIL…VNNSVLQKQQ (83 aa). One can recognise a Fibrinogen C-terminal domain in the interval 275–495; that stretch reads KDEQIIFRDC…ATTMMIRPAD (221 aa). A disulfide bridge links Cys284 with Cys313. 4 residues coordinate Ca(2+): Asp429, Asp431, Cys433, and Cys435. 2 cysteine pairs are disulfide-bonded: Cys433-Cys435 and Cys437-Cys450.

As to quaternary structure, interacts with TEK/TIE2, competing for the same binding site as ANGPT1. Interacts with ITGA5. Interacts with SVEP1/polydom. Interacts with THBD; this interaction significantly inhibits the generation of activated PC and TAFIa/CPB2 by the thrombin/thrombomodulin complex.

The protein resides in the secreted. Binds to TEK/TIE2, competing for the ANGPT1 binding site, and modulating ANGPT1 signaling. Can induce tyrosine phosphorylation of TEK/TIE2 in the absence of ANGPT1. In the absence of angiogenic inducers, such as VEGF, ANGPT2-mediated loosening of cell-matrix contacts may induce endothelial cell apoptosis with consequent vascular regression. In concert with VEGF, it may facilitate endothelial cell migration and proliferation, thus serving as a permissive angiogenic signal. Involved in the regulation of lymphangiogenesis. The sequence is that of Angiopoietin-2 (ANGPT2) from Bos taurus (Bovine).